We begin with the raw amino-acid sequence, 244 residues long: Globin-like protein 9 (244 aa).

The tract at residues 1–38 (MRRMAKYDRSYSMQDAHGPNGLARRGTQRGCSRSKSTR) is disordered. One can recognise a Globin domain in the interval 47–200 (SLTFSQKQAL…LIDELRGGFE (154 aa)). His-111 and His-143 together coordinate heme.

Belongs to the globin family.

The polypeptide is Globin-like protein 9 (Caenorhabditis briggsae).